Here is a 289-residue protein sequence, read N- to C-terminus: 2-hydroxy-6-oxononadienedioate/2-hydroxy-6-oxononatrienedioate hydrolase 1 (289 aa).

Residues 39 to 275 (TVVMLHGSGP…RCGHWAQWEH (237 aa)) enclose the AB hydrolase-1 domain. Residue His-269 is the Proton acceptor of the active site.

It belongs to the AB hydrolase superfamily. MhpC family. In terms of assembly, homodimer.

It carries out the reaction (2Z,4E)-2-hydroxy-6-oxonona-2,4-dienedioate + H2O = (2Z)-2-hydroxypenta-2,4-dienoate + succinate + H(+). It catalyses the reaction (2Z,4E,7E)-2-hydroxy-6-oxonona-2,4,7-trienedioate + H2O = (2Z)-2-hydroxypenta-2,4-dienoate + fumarate + H(+). It participates in aromatic compound metabolism; 3-phenylpropanoate degradation. Catalyzes the cleavage of the C5-C6 bond of 2-hydroxy-6-oxononadienedioate and 2-hydroxy-6-oxononatrienedioate, a dienol ring fission product of the bacterial meta-cleavage pathway for degradation of phenylpropionic acid. In Dechloromonas aromatica (strain RCB), this protein is 2-hydroxy-6-oxononadienedioate/2-hydroxy-6-oxononatrienedioate hydrolase 1.